Reading from the N-terminus, the 886-residue chain is Coatomer subunit gamma (886 aa).

HEAT repeat units follow at residues 66 to 103 (VEATEVFFSVTKLFQSKDTGLRRMVYLIIKELSPSSDE), 288 to 325 (RELTPAITVLQLFLSSPRPVLRFAAVRTLNKVAMTHPM), 327 to 359 (VTNCNIDMESLISDQNRSIATLAITTLLKTGNE), 360 to 397 (SSVERLMKQITNFMSDIADEFKIVVVDAIRSLCVKFPL), and 472 to 509 (SDPSKYIRYIYNRVHLENATVRAAAVSTLAKFGFMVES). The tract at residues 592–613 (SQPLAEKKAQGKKPTGLGAPPA) is disordered.

The protein belongs to the COPG family. Oligomeric complex that consists of at least the alpha, beta, beta', gamma, delta, epsilon and zeta subunits.

Its subcellular location is the cytoplasm. It localises to the golgi apparatus membrane. It is found in the cytoplasmic vesicle. The protein resides in the COPI-coated vesicle membrane. The coatomer is a cytosolic protein complex that binds to dilysine motifs and reversibly associates with Golgi non-clathrin-coated vesicles, which further mediate biosynthetic protein transport from the ER, via the Golgi up to the trans Golgi network. Coatomer complex is required for budding from Golgi membranes, and is essential for the retrograde Golgi-to-ER transport of dilysine-tagged proteins. In Arabidopsis thaliana (Mouse-ear cress), this protein is Coatomer subunit gamma.